Reading from the N-terminus, the 417-residue chain is FAD-dependent monooxygenase aptC (417 aa).

An N-terminal signal peptide occupies residues 1–18; that stretch reads MTLPVLIIGAGLSGLTTA. Residues Glu-32, Ala-43, Arg-117, Asp-332, and Gly-345 each contribute to the FAD site.

It belongs to the paxM FAD-dependent monooxygenase family. Requires FAD as cofactor.

The catalysed reaction is 3,6,8,9-tetrahydroxy-1-oxo-3-(2-oxopropyl)-1,2,3,4-tetrahydroanthracene-2-carboxyl-[ACP] + NADPH + O2 + H(+) = 2,3,6,8,9-pentahydroxy-1-oxo-3-(2-oxopropyl)-1,2,3,4-tetrahydroanthracene-2-carboxyl-[ACP] + NADP(+) + H2O. It functions in the pathway secondary metabolite biosynthesis. FAD-dependent monooxygenase; part of the gene cluster that mediates the biosynthesis of asperthecin, an anthraquinone pigment. Polyketide synthase (PKS) aptA catalyzes the formation of the aromatic polyketide from acetyl coenzyme A and seven malonyl coenzyme A molecules. Polyketide is subsequently hydrolyzed by the action of the hydrolase aptB into endocrocin-9-anthrone. Endocrocin-9-anthrone is then oxidized into endocrocin by the monooxygenase aptC. Endocrocin is likely to decarboxylate spontaneously to form emodin which explains why there is no decarboxylase in the asperthecin biosynthesis cluster. Finally, aptC or another endogenous oxygenase catalyzes additional oxidation steps to form asperthecin. This is FAD-dependent monooxygenase aptC from Emericella nidulans (strain FGSC A4 / ATCC 38163 / CBS 112.46 / NRRL 194 / M139) (Aspergillus nidulans).